Reading from the N-terminus, the 141-residue chain is Nucleoside diphosphate kinase (141 aa).

Residues Lys11, Phe59, Arg87, Thr93, Arg104, and Asn114 each contribute to the ATP site. His117 functions as the Pros-phosphohistidine intermediate in the catalytic mechanism.

It belongs to the NDK family. As to quaternary structure, homotetramer. Mg(2+) is required as a cofactor.

The protein resides in the cytoplasm. It carries out the reaction a 2'-deoxyribonucleoside 5'-diphosphate + ATP = a 2'-deoxyribonucleoside 5'-triphosphate + ADP. The enzyme catalyses a ribonucleoside 5'-diphosphate + ATP = a ribonucleoside 5'-triphosphate + ADP. Major role in the synthesis of nucleoside triphosphates other than ATP. The ATP gamma phosphate is transferred to the NDP beta phosphate via a ping-pong mechanism, using a phosphorylated active-site intermediate. The protein is Nucleoside diphosphate kinase of Cupriavidus pinatubonensis (strain JMP 134 / LMG 1197) (Cupriavidus necator (strain JMP 134)).